The following is a 749-amino-acid chain: Cytosolic phospholipase A2 (749 aa).

The 124-residue stretch at 1–124 (MASIDPYQHI…GEKKQVPFTF (124 aa)) folds into the C2 domain. Residues 1 to 178 (MASIDPYQHI…LRKLLGPEKT (178 aa)) form a phospholipid binding region. Ca(2+) is bound by residues Asp-40, Thr-41, Asp-43, Asn-65, Asp-93, Ala-94, and Asn-95. The 603-residue stretch at 138 to 740 (VCSSTDLRFS…NDVEARKLLH (603 aa)) folds into the PLA2c domain. Ser-229 functions as the Nucleophile in the catalytic mechanism. Residues 417-458 (MEEEIENLKPKHILGNDSSDSDDEMQEPKGTENSKAEEEYQR) are disordered. Residues 442-457 (QEPKGTENSKAEEEYQ) show a composition bias toward basic and acidic residues. Asp-549 acts as the Proton acceptor in catalysis.

It localises to the cytoplasm. The protein resides in the cytoplasmic vesicle. The enzyme catalyses a 1,2-diacyl-sn-glycero-3-phosphocholine + H2O = a 1-acyl-sn-glycero-3-phosphocholine + a fatty acid + H(+). It catalyses the reaction a 1-acyl-sn-glycero-3-phosphocholine + H2O = sn-glycerol 3-phosphocholine + a fatty acid + H(+). With respect to regulation, stimulated by agonists such as ATP, EGF, thrombin and bradykinin as well as by cytosolic Ca(2+). In terms of biological role, selectively hydrolyzes arachidonyl phospholipids in the sn-2 position releasing arachidonic acid. Together with its lysophospholipid activity, it is implicated in the initiation of the inflammatory response. The polypeptide is Cytosolic phospholipase A2 (pla2g4a) (Xenopus tropicalis (Western clawed frog)).